Consider the following 123-residue polypeptide: Ribosome-binding factor A (123 aa).

This sequence belongs to the RbfA family. As to quaternary structure, monomer. Binds 30S ribosomal subunits, but not 50S ribosomal subunits or 70S ribosomes.

The protein resides in the cytoplasm. Functionally, one of several proteins that assist in the late maturation steps of the functional core of the 30S ribosomal subunit. Associates with free 30S ribosomal subunits (but not with 30S subunits that are part of 70S ribosomes or polysomes). Required for efficient processing of 16S rRNA. May interact with the 5'-terminal helix region of 16S rRNA. The sequence is that of Ribosome-binding factor A from Legionella pneumophila (strain Paris).